The sequence spans 85 residues: U4-theraphotoxin-Hhn1o (85 aa).

The first 22 residues, 1-22, serve as a signal peptide directing secretion; the sequence is MKVTLIAILTCAAVLVLHTTAA. The propeptide occupies 23–48; that stretch reads EELEAESQLMEVGMPDTELAAVDEER. 3 cysteine pairs are disulfide-bonded: Cys-52–Cys-66, Cys-56–Cys-77, and Cys-71–Cys-82.

It belongs to the neurotoxin 12 (Hwtx-2) family. 02 (Hwtx-2) subfamily. Expressed by the venom gland.

The protein localises to the secreted. In terms of biological role, postsynaptic neurotoxin. The chain is U4-theraphotoxin-Hhn1o from Cyriopagopus hainanus (Chinese bird spider).